The following is a 280-amino-acid chain: Undecaprenyl-diphosphatase (280 aa).

8 helical membrane-spanning segments follow: residues 3 to 23, 45 to 65, 88 to 108, 115 to 135, 150 to 170, 191 to 211, 225 to 245, and 255 to 275; these read IILL…EFLP, VDLF…YDYW, QLGL…FTFA, LFNP…IFYV, VSLK…IPGT, AEFS…LDFI, VLGI…RLLV, and IFAW…WGFG.

The protein belongs to the UppP family.

The protein localises to the cell inner membrane. The enzyme catalyses di-trans,octa-cis-undecaprenyl diphosphate + H2O = di-trans,octa-cis-undecaprenyl phosphate + phosphate + H(+). Catalyzes the dephosphorylation of undecaprenyl diphosphate (UPP). Confers resistance to bacitracin. This is Undecaprenyl-diphosphatase from Psychrobacter cryohalolentis (strain ATCC BAA-1226 / DSM 17306 / VKM B-2378 / K5).